The primary structure comprises 231 residues: uncharacterized protein (231 aa).

The SWIM-type zinc finger occupies Tyr43–Glu76.

This is an uncharacterized protein from Methanocaldococcus jannaschii (strain ATCC 43067 / DSM 2661 / JAL-1 / JCM 10045 / NBRC 100440) (Methanococcus jannaschii).